The following is a 393-amino-acid chain: Na(+)/H(+) antiporter NhaA (393 aa).

11 consecutive transmembrane segments (helical) span residues Ala18 to Trp38, Met65 to Ile85, Met101 to Ile121, Gly131 to Gly151, Val160 to Phe180, Asn184 to Asn204, Ala210 to Ile230, Ala260 to Val280, Ile298 to Ile318, Phe334 to Leu354, and Ile369 to Ser389.

It belongs to the NhaA Na(+)/H(+) (TC 2.A.33) antiporter family.

Its subcellular location is the cell inner membrane. The catalysed reaction is Na(+)(in) + 2 H(+)(out) = Na(+)(out) + 2 H(+)(in). Its function is as follows. Na(+)/H(+) antiporter that extrudes sodium in exchange for external protons. This Albidiferax ferrireducens (strain ATCC BAA-621 / DSM 15236 / T118) (Rhodoferax ferrireducens) protein is Na(+)/H(+) antiporter NhaA.